A 458-amino-acid chain; its full sequence is Ribulose bisphosphate carboxylase (458 aa).

Position 111 (Asn111) interacts with substrate. Residue Lys166 is the Proton acceptor of the active site. Lys168 serves as a coordination point for substrate. Lys191, Asp193, and Glu194 together coordinate Mg(2+). N6-carboxylysine is present on Lys191. His287 serves as the catalytic Proton acceptor. Substrate contacts are provided by Arg288, His321, and Ser368.

This sequence belongs to the RuBisCO large chain family. Type II subfamily. Homodimer. Mg(2+) serves as cofactor.

It catalyses the reaction 2 (2R)-3-phosphoglycerate + 2 H(+) = D-ribulose 1,5-bisphosphate + CO2 + H2O. The enzyme catalyses D-ribulose 1,5-bisphosphate + O2 = 2-phosphoglycolate + (2R)-3-phosphoglycerate + 2 H(+). RuBisCO catalyzes two reactions: the carboxylation of D-ribulose 1,5-bisphosphate, the primary event in carbon dioxide fixation, as well as the oxidative fragmentation of the pentose substrate. Both reactions occur simultaneously and in competition at the same active site. The chain is Ribulose bisphosphate carboxylase (cbbM) from Rhodobacter capsulatus (Rhodopseudomonas capsulata).